We begin with the raw amino-acid sequence, 228 residues long: 7-cyano-7-deazaguanine synthase (228 aa).

An ATP-binding site is contributed by 11-21; it reads LSGGLDSATVL. Residues C191, C201, C204, and C207 each coordinate Zn(2+).

The protein belongs to the QueC family. It depends on Zn(2+) as a cofactor.

The catalysed reaction is 7-carboxy-7-deazaguanine + NH4(+) + ATP = 7-cyano-7-deazaguanine + ADP + phosphate + H2O + H(+). It participates in purine metabolism; 7-cyano-7-deazaguanine biosynthesis. Catalyzes the ATP-dependent conversion of 7-carboxy-7-deazaguanine (CDG) to 7-cyano-7-deazaguanine (preQ(0)). The sequence is that of 7-cyano-7-deazaguanine synthase from Magnetococcus marinus (strain ATCC BAA-1437 / JCM 17883 / MC-1).